The following is a 462-amino-acid chain: Cysteine--tRNA ligase (462 aa).

C24 contributes to the Zn(2+) binding site. The 'HIGH' region motif lies at 26–36 (PTVYDDAHLGH). Zn(2+)-binding residues include C199, H224, and E228. Positions 256–260 (KMSKS) match the 'KMSKS' region motif. K259 contributes to the ATP binding site.

Belongs to the class-I aminoacyl-tRNA synthetase family. As to quaternary structure, monomer. Zn(2+) is required as a cofactor.

It localises to the cytoplasm. The enzyme catalyses tRNA(Cys) + L-cysteine + ATP = L-cysteinyl-tRNA(Cys) + AMP + diphosphate. The protein is Cysteine--tRNA ligase of Campylobacter jejuni subsp. jejuni serotype O:6 (strain 81116 / NCTC 11828).